A 241-amino-acid polypeptide reads, in one-letter code: Ribosome-recycling factor, mitochondrial (241 aa).

It belongs to the RRF family.

The protein resides in the mitochondrion. Functionally, necessary for protein synthesis in mitochondria. Functions as a ribosome recycling factor in mitochondria. The chain is Ribosome-recycling factor, mitochondrial (RRF1) from Kluyveromyces lactis (strain ATCC 8585 / CBS 2359 / DSM 70799 / NBRC 1267 / NRRL Y-1140 / WM37) (Yeast).